A 316-amino-acid polypeptide reads, in one-letter code: ATP synthase gamma chain (316 aa).

It belongs to the ATPase gamma chain family. As to quaternary structure, F-type ATPases have 2 components, CF(1) - the catalytic core - and CF(0) - the membrane proton channel. CF(1) has five subunits: alpha(3), beta(3), gamma(1), delta(1), epsilon(1). CF(0) has three main subunits: a, b and c.

Its subcellular location is the cellular thylakoid membrane. Its function is as follows. Produces ATP from ADP in the presence of a proton gradient across the membrane. The gamma chain is believed to be important in regulating ATPase activity and the flow of protons through the CF(0) complex. The sequence is that of ATP synthase gamma chain from Synechococcus sp. (strain WH7803).